A 479-amino-acid polypeptide reads, in one-letter code: Probable cytosol aminopeptidase (479 aa).

Mn(2+) contacts are provided by K247 and D252. K259 is a catalytic residue. The Mn(2+) site is built by D270, D329, and E331. Residue R333 is part of the active site.

The protein belongs to the peptidase M17 family. Mn(2+) is required as a cofactor.

It localises to the cytoplasm. It carries out the reaction Release of an N-terminal amino acid, Xaa-|-Yaa-, in which Xaa is preferably Leu, but may be other amino acids including Pro although not Arg or Lys, and Yaa may be Pro. Amino acid amides and methyl esters are also readily hydrolyzed, but rates on arylamides are exceedingly low.. It catalyses the reaction Release of an N-terminal amino acid, preferentially leucine, but not glutamic or aspartic acids.. In terms of biological role, presumably involved in the processing and regular turnover of intracellular proteins. Catalyzes the removal of unsubstituted N-terminal amino acids from various peptides. This is Probable cytosol aminopeptidase from Vesicomyosocius okutanii subsp. Calyptogena okutanii (strain HA).